Reading from the N-terminus, the 396-residue chain is Cytochrome c biogenesis protein Ccs1 (396 aa).

3 consecutive transmembrane segments (helical) span residues L22 to I42, S79 to K99, and A162 to A182.

The protein belongs to the Ccs1/CcsB family. In terms of assembly, may interact with CcsA.

Its subcellular location is the plastid. It localises to the chloroplast thylakoid membrane. Its function is as follows. Required during biogenesis of c-type cytochromes (cytochrome c6 and cytochrome f) at the step of heme attachment. This Cyanidium caldarium (Red alga) protein is Cytochrome c biogenesis protein Ccs1.